The chain runs to 179 residues: uncharacterized protein (179 aa).

This is an uncharacterized protein from Salmonella typhimurium (strain LT2 / SGSC1412 / ATCC 700720).